Reading from the N-terminus, the 496-residue chain is Endoglucanase (496 aa).

Residues 1-23 (MGYHSVFIAVFLWSSMVCHNGLA) form the signal peptide. Aspartate 93 acts as the Nucleophile in catalysis. Active-site residues include histidine 415, aspartate 467, and glutamate 476.

Belongs to the glycosyl hydrolase 9 (cellulase E) family.

It catalyses the reaction Endohydrolysis of (1-&gt;4)-beta-D-glucosidic linkages in cellulose, lichenin and cereal beta-D-glucans.. Its function is as follows. Involved in ripening fruit process. The polypeptide is Endoglucanase (Phaseolus vulgaris (Kidney bean)).